The primary structure comprises 299 residues: MKLKEILSMETKELILKANRMTSNLKLDLCSIVNAKSGICDQDCKFCAQSSLYNTGVKKYPLLDKESILEKAKEAEKMGAIRFGIVTSGKRLTRKEILKVAKIIEFLKANTNLKICASLGVLEKDELRYLKENGLDRYHHNLETSPGFFRNICTTHTFYDRVKTVENAKNVELEVCSGGIFGVGENFDDRLELAKILKDLEVDSVPINFLIPIRGTPFENFQKLDVVERIRTIAMFRVVLGENVTIKIAAGREDFGDFQALAFFAGANGMIVGGYLTLKGRSYDDDIKLIEGLRELMRW.

In terms of domain architecture, Radical SAM core spans 22 to 252 (TSNLKLDLCS…NVTIKIAAGR (231 aa)). C40, C44, and C47 together coordinate [4Fe-4S] cluster. C116, C176, and K247 together coordinate [2Fe-2S] cluster.

This sequence belongs to the radical SAM superfamily. Biotin synthase family. As to quaternary structure, homodimer. Requires [4Fe-4S] cluster as cofactor. [2Fe-2S] cluster is required as a cofactor.

The enzyme catalyses (4R,5S)-dethiobiotin + (sulfur carrier)-SH + 2 reduced [2Fe-2S]-[ferredoxin] + 2 S-adenosyl-L-methionine = (sulfur carrier)-H + biotin + 2 5'-deoxyadenosine + 2 L-methionine + 2 oxidized [2Fe-2S]-[ferredoxin]. It participates in cofactor biosynthesis; biotin biosynthesis; biotin from 7,8-diaminononanoate: step 2/2. Its function is as follows. Catalyzes the conversion of dethiobiotin (DTB) to biotin by the insertion of a sulfur atom into dethiobiotin via a radical-based mechanism. The chain is Biotin synthase from Thermotoga petrophila (strain ATCC BAA-488 / DSM 13995 / JCM 10881 / RKU-1).